We begin with the raw amino-acid sequence, 388 residues long: MEVISTNTNGSTIFKNGAIPMNGYQNGTSKHQNGHQNGTSEHRNGHQNGISEHQNGHKNGTSEHQNGHQNGTSEQQNGTISHDNGNELQLLGSSNSIKPGWFSEFSALWPGEAFSLKVEKLLFQGKSDYQDVMLFESATYGKVLTLDGAIQHTENGGFPYTEMIVHLPLGSIPNPKKVLIIGGGIGFTLFEMLRYPSIEKIDIVEIDDVVVDVSRKFFPYLAANFNDPRVTLVLGDGAAFVKAAQAGYYDAIIVDSSDPIGPAKDLFERPFFEAVAKALRPGGVVCTQAESIWLHMHIIKQIIANCRQVFKGSVNYAWTTVPTYPTGVIGYMLCSTEGPEVDFKNPINPIDKETTQVKSKLAPLKFYNFDIHKAAFILPSFARSMIES.

Polar residues-rich tracts occupy residues 1–14 (MEVI…STIF), 23–39 (GYQN…QNGT), and 46–88 (HQNG…GNEL). The disordered stretch occupies residues 1–88 (MEVISTNTNG…TISHDNGNEL (88 aa)). Residues 99 to 336 (PGWFSEFSAL…GVIGYMLCST (238 aa)) enclose the PABS domain. S-adenosyl-L-methionine-binding positions include Q130, E205, and 236–237 (DG). The active-site Proton acceptor is D255. Position 324 (Y324) interacts with S-adenosyl-L-methionine.

This sequence belongs to the class I-like SAM-binding methyltransferase superfamily. Spermidine/spermine synthase family. In terms of tissue distribution, mainly expressed in roots.

The enzyme catalyses putrescine + S-adenosyl-L-methionine = N-methylputrescine + S-adenosyl-L-homocysteine + H(+). It functions in the pathway alkaloid biosynthesis; nicotine biosynthesis. In terms of biological role, involved in the biosynthesis of pyridine alkaloid natural products, leading mainly to the production of anabasine, anatabine, nicotine and nornicotine, effective deterrents against herbivores with antiparasitic and pesticide properties (neurotoxins); nornicotine serves as the precursor in the synthesis of the carcinogen compound N'-nitrosonornicotine (NNN). Methyltransferase that mediates the conversion of putrescine to N-methylputrescine. The chain is Putrescine N-methyltransferase 1 from Nicotiana attenuata (Coyote tobacco).